A 307-amino-acid chain; its full sequence is 2-haloacid dehalogenase, configuration-inverting (307 aa).

The protein belongs to the HAD-like hydrolase superfamily. S-2-haloalkanoic acid dehalogenase family. As to quaternary structure, homodimer.

The enzyme catalyses an (S)-2-haloacid + H2O = a (2R)-2-hydroxycarboxylate + a halide anion + H(+). It catalyses the reaction an (R)-2-haloacid + H2O = a (2S)-2-hydroxycarboxylate + a halide anion + H(+). Functionally, dehalogenates both (S)- and (R)-2-haloalkanoic acids to the corresponding (R)- and (S)-hydroxyalkanoic acids, respectively, with inversion of configuration at C-2. Acts on 2-haloalkanoic acids whose carbon chain lengths are five or less. This Pseudomonas sp. (strain 113) protein is 2-haloacid dehalogenase, configuration-inverting.